Here is a 542-residue protein sequence, read N- to C-terminus: Chaperonin GroEL 1 (542 aa).

ATP-binding positions include 29 to 32, 86 to 90, glycine 414, 479 to 481, and aspartate 495; these read TIGP, DGTTT, and DAL.

This sequence belongs to the chaperonin (HSP60) family. In terms of assembly, forms a cylinder of 14 subunits composed of two heptameric rings stacked back-to-back. Interacts with the co-chaperonin GroES.

The protein resides in the cytoplasm. It catalyses the reaction ATP + H2O + a folded polypeptide = ADP + phosphate + an unfolded polypeptide.. Together with its co-chaperonin GroES, plays an essential role in assisting protein folding. The GroEL-GroES system forms a nano-cage that allows encapsulation of the non-native substrate proteins and provides a physical environment optimized to promote and accelerate protein folding. The polypeptide is Chaperonin GroEL 1 (Synechococcus sp. (strain JA-3-3Ab) (Cyanobacteria bacterium Yellowstone A-Prime)).